Consider the following 2671-residue polypeptide: Stalled ribosome sensor GCN1 (2671 aa).

Alanine 2 bears the N-acetylalanine mark. HEAT repeat units lie at residues 140-178, 257-293, 294-331, 385-423, 425-459, 460-500, 560-597, 599-636, 700-732, and 733-772; these read NKLVEVQCLLLLEVLGGSHKHAVDGAVKKLTKLWKENPG, EFKDLILPTIQKSLLRSPENVIETISSLLASVTLDLS, QYALDIVKGLANQLKSNSPRLMDEAVLALRNLARQCSD, CVAELFIPFLQQEVHEGTLVHAVSILALWCNRFTTEVPK, LTDWFKKVFSLKTSTSAVRHAYLQCMLASFRGDTL, LQAL…SKLS, SKVQQYYRVLVAVLLSRTWHVRRQAQQTVRKLLSSLGG, KLANGLLDELKTVLNSHKVLPLEALVTDAGEVTEMGKT, AFITRHLDQIIPRITTQSPLNQSSMNAMGSLSV, and LSPDRVLPQLISTITASVQNPALCLVTREEFSIMQTPAGE. Phosphoserine is present on serine 729. Serine 786 is modified (phosphoserine). The stretch at 804–865 forms a coiled coil; sequence QIIEMELKEE…EAALGLLDAI (62 aa). HEAT repeat units lie at residues 879 to 918, 979 to 1016, 1035 to 1072, 1078 to 1115, 1155 to 1192, 1210 to 1250, 1251 to 1289, 1290 to 1332, 1335 to 1372, 1374 to 1410, 1413 to 1451, 1455 to 1492, 1493 to 1530, 1534 to 1571, 1573 to 1609, 1611 to 1648, 1653 to 1690, 1692 to 1729, 1731 to 1769, 1773 to 1810, 1812 to 1848, 1921 to 1958, 1959 to 1996, 2001 to 2038, 2039 to 2074, 2076 to 2108, 2111 to 2146, 2147 to 2184, 2188 to 2225, 2259 to 2296, 2301 to 2338, 2339 to 2380, 2382 to 2417, 2422 to 2459, 2546 to 2583, 2588 to 2625, and 2627 to 2661; these read VLVDAFLPLLKSPLAAPRVKGPFLSLAACVMPPRLKTLGT, SLVFPMLKMVLTEMPYHSEEEEEQMAQILQILTVHAQL, LPRVAMLRLLTWVIGTGSPRLQVLASDTLTALCASSSG, FAEQEEVDVLLAALQSPCASVRETALRGLMELRLVLPS, DLQSDLCSLLIDDVIYHEAAVRQAGAEALSQAVARYQR, YRPP…YLDS, SQVKPLFQFFVPDALNDRNPDVRKCMLDAALATLNAHGK, ENVN…HLDK, PKVKPIVAKLIAALSTPSQQVQESVASCLPPLVPAVKE, AGGMIQRLMQQLLESDKYAERKGAAYGLAGLVKGLGI, LKQQEMMAALTDAIQDKKNFRRREGALFAFEMLCTMLGK, PYVVHVLPHLLLCFGDGNQYVREAADDCAKAVMSNLSA, HGVKLVLPSLLAALEEESWRTKAGSVELLGAMAYCAPK, SCLPNIVPKLTEVLTDSHVKVQKAGQQALRQIGSVIRN, EILAIAPVLLDALTDPSRKTQKCLQTLLDTKFVHFID, PSLALIMPIVQRAFQDRSTDTRKMAAQIIGNMYSLTDQ, PYLPSVTPGLKASLLDPVPEVRTVSAKALGAMVKGMGE, CFEDLLPWLMETLTYEQSSVDRSGAAQGLAEVMAGLGV, KLEKLMPEIVATASKVDIAPHVRDGYIMMFNYLPITFGD, PYVGPIIPCILKALADENEFVRDTALRAGQRVISMYAE, AIALLLPQLEQGLFDDLWRIRFSSVQLLGDLLFHISG, EILPTLFGLLLGFLASTCADKRTIAARTLGDLVRKLGE, KILPEIIPILEEGLRSQKSDERQGVCIGLSEIMKSTSR, FFSESLVPTARKALCDPLEEVREAAAKTFEQLHSTIGH, QALEDILPFLLKQLDDEEVSEFALDGLKQVMAVKSR, VLPYLVPKLTTPPVNTRVLAFLSSVAGDALTRH, VILPAVMLALKEKLGTPDEQLEMANCQAVILSVEDD, TGHRIIIEDLLEATRSPEVGMRQAAAIILNMYCSRSKA, SHLRSLVSGLIRLFNDSSPVVLEESWDALNAITKKLDA, RGVTSILPVLREGVLTGSPEQKEEAAKGLGLVIRLTSA, PSVVSITGPLIRILGDRFNWTVKAALLETLSLLLGKVG, IALK…IHVK, DPLFTELLNGIRAVEDPGIRDTMLQALRFVIQGAGS, AIRKNLVSLLLSMLGHDEDNTRISTAGCLGELCAFLTD, QLPPRLSSLLIKCLQNPCSDIRLVAEKMIWWANKEPRP, QTIKPILKALLDNTKDKNTVVRAYSDQAIVNLLKMRRG, and ELLQSLSKILDVASLEALNECSRRSLRKLACQADS. An RWDBD region region spans residues 2260–2408; it reads GVTSILPVLR…GIRDTMLQAL (149 aa). The residue at position 2276 (serine 2276) is a Phosphoserine.

It belongs to the GCN1 family. Interacts with EIF2AK4/GCN2; this interaction stimulates the EIF2AK4/GCN2 kinase activity and is impaired by IMPACT upon a variety of stress conditions, such as amino acid depletion, UV-C irradiation, proteasome inhibitor treatment and glucose deprivation. Interacts with IMPACT; this prevents the interaction of GCN1 with EIF2AK4/GCN2 and inhibits EIF2AK4/GCN2 kinase activity. Interacts with RNF14; interaction takes place following ribosome stalling and promotes recruitment of RNF14. Expressed in the hypothalamus, cortex and hippocampus.

It is found in the cytoplasm. Functionally, ribosome collision sensor that plays a key role in the RNF14-RNF25 translation quality control pathway, a pathway that takes place when a ribosome has stalled during translation, and which promotes ubiquitination and degradation of translation factors on stalled ribosomes. Directly binds to the ribosome and acts as a sentinel for colliding ribosomes: activated following ribosome stalling and promotes recruitment of RNF14, which directly ubiquitinates EEF1A1/eEF1A, leading to its degradation. In addition to EEF1A1/eEF1A, the RNF14-RNF25 translation quality control pathway mediates degradation of ETF1/eRF1 and ubiquitination of ribosomal protein. GCN1 also acts as a positive activator of the integrated stress response (ISR) by mediating activation of EIF2AK4/GCN2 in response to amino acid starvation. Interaction with EIF2AK4/GCN2 on translating ribosomes stimulates EIF2AK4/GCN2 kinase activity, leading to phosphorylation of eukaryotic translation initiation factor 2 (eIF-2-alpha/EIF2S1). EIF2S1/eIF-2-alpha phosphorylation converts EIF2S1/eIF-2-alpha into a global protein synthesis inhibitor, leading to a global attenuation of cap-dependent translation, and thus to a reduced overall utilization of amino acids, while concomitantly initiating the preferential translation of ISR-specific mRNAs, such as the transcriptional activator ATF4, and hence allowing ATF4-mediated reprogramming of amino acid biosynthetic gene expression to alleviate nutrient depletion. The chain is Stalled ribosome sensor GCN1 from Mus musculus (Mouse).